Reading from the N-terminus, the 336-residue chain is MFAPIIAIDAMGGDFGPHCVVPASIAFLAENPSSQLILVGQPALLEELLSRHPSLDRQRLRVHAASEVIGSDERPSQALRGKPDASMRVALELVRDGCAQACVSAGNTGALMALSRHLLKTLPGIDRPAMVTAVPTEKGHCHLLDLGANVDCSAEHLYQFAVMGAVAAEALGCASPRVALLNVGVEEIKGNQQVKLAASLLQKAEGLNFAGYIEGDGLYRGEADVVVCDGFVGNILLKASEGLAAMVSARIEQRFRDGLAAKLVGALALPLLRRLRGDIAPARYNGASFLGLQGIVVKSHGSAAEEGFQSALRRAALEVRENLPQRLHGRLEHLLL.

This sequence belongs to the PlsX family. As to quaternary structure, homodimer. Probably interacts with PlsY.

It is found in the cytoplasm. It catalyses the reaction a fatty acyl-[ACP] + phosphate = an acyl phosphate + holo-[ACP]. It functions in the pathway lipid metabolism; phospholipid metabolism. In terms of biological role, catalyzes the reversible formation of acyl-phosphate (acyl-PO(4)) from acyl-[acyl-carrier-protein] (acyl-ACP). This enzyme utilizes acyl-ACP as fatty acyl donor, but not acyl-CoA. The protein is Phosphate acyltransferase of Pseudomonas paraeruginosa (strain DSM 24068 / PA7) (Pseudomonas aeruginosa (strain PA7)).